A 558-amino-acid polypeptide reads, in one-letter code: V-set and immunoglobulin domain-containing protein 10 (558 aa).

Residues 1-20 form the signal peptide; that stretch reads MAGLRVLLCLGALLARQGSA. The Extracellular portion of the chain corresponds to 21-426; sequence GLQLLLNPSR…IWLSVKEPLN (406 aa). N-linked (GlcNAc...) asparagine glycans are attached at residues Asn32, Asn60, Asn121, Asn150, Asn159, and Asn218. Ig-like C2-type domains lie at 37–140, 144–235, 248–327, and 332–420; these read PNSE…RLRV, PAYV…RKVT, PQCS…VKLS, and PSQP…IWLS. A disulfide bond links Cys65 and Cys124. Disulfide bonds link Cys174/Cys221 and Cys265/Cys308. Asn344 carries an N-linked (GlcNAc...) asparagine glycan. The cysteines at positions 349 and 404 are disulfide-linked. A helical transmembrane segment spans residues 427–447; sequence IGGIVGTVVSLLLLGLAVVSG. The Cytoplasmic segment spans residues 448–558; it reads LTLYYSPAFW…GIVQEDGKPV (111 aa). Residues 477–506 show a composition bias toward acidic residues; it reads DSEEEEEEEEEEEEKEDVAEEVEQETNETE. Disordered regions lie at residues 477-515 and 532-558; these read DSEEEEEEEEEEEEKEDVAEEVEQETNETEELPKGISKH and MGNGFQEFQDDSDGQQSGIVQEDGKPV.

The protein localises to the membrane. The polypeptide is V-set and immunoglobulin domain-containing protein 10 (Vsig10) (Mus musculus (Mouse)).